A 174-amino-acid polypeptide reads, in one-letter code: Adipose-secreted signaling protein (174 aa).

At Ala2 the chain carries N-acetylalanine. Thr147 is modified (phosphothreonine).

It belongs to the ADISSP family.

The protein localises to the secreted. Functionally, adipocyte-secreted protein (adipokine) that acts as a key regulator for white adipose tissue (WAT) thermogenesis and glucose homeostasis at least in part through activation of protein kinase A (PKA). This chain is Adipose-secreted signaling protein, found in Rattus norvegicus (Rat).